The sequence spans 120 residues: Large ribosomal subunit protein uL18 (120 aa).

Belongs to the universal ribosomal protein uL18 family. Part of the 50S ribosomal subunit; part of the 5S rRNA/L5/L18/L25 subcomplex. Contacts the 5S and 23S rRNAs.

Its function is as follows. This is one of the proteins that bind and probably mediate the attachment of the 5S RNA into the large ribosomal subunit, where it forms part of the central protuberance. This chain is Large ribosomal subunit protein uL18, found in Rhizobium leguminosarum bv. trifolii (strain WSM2304).